The primary structure comprises 765 residues: Endosialin (765 aa).

Residues 1 to 17 (MLLRLLLAWVAAVPALG) form the signal peptide. The Extracellular segment spans residues 18–695 (QVPWTPEPRA…GQSQRDDRWL (678 aa)). The region spanning 30–156 (GPSSCYALFP…CTLAVDGYLC (127 aa)) is the C-type lectin domain. Cystine bridges form between cysteine 131-cysteine 147, cysteine 164-cysteine 213, cysteine 203-cysteine 230, cysteine 316-cysteine 326, cysteine 322-cysteine 335, and cysteine 337-cysteine 350. Residues 162–232 (GACPALPLEV…WSQTGPLCPG (71 aa)) form the Sushi domain. Residues 312–351 (DTDECQIAGVCQQMCVNYVGGFECYCSEGHELEADGISCS) enclose the EGF-like; calcium-binding domain. O-linked (GalNAc...) threonine glycans are attached at residues threonine 401, threonine 428, threonine 448, threonine 456, threonine 459, and threonine 466. 2 O-linked (GalNAc...) serine glycosylation sites follow: serine 467 and serine 470. Threonine 472 carries O-linked (GalNAc...) threonine glycosylation. Serine 477 is a glycosylation site (O-linked (GalNAc...) serine). 11 O-linked (GalNAc...) threonine glycosylation sites follow: threonine 488, threonine 517, threonine 520, threonine 535, threonine 552, threonine 554, threonine 556, threonine 570, threonine 571, threonine 604, and threonine 613. Residues 548 to 675 (MSPDTHTITY…QLPSVPSTAA (128 aa)) form a disordered region. The segment covering 622–633 (PAFPSSPLPPQR) has biased composition (pro residues). O-linked (GalNAc...) serine glycosylation is found at serine 626 and serine 627. Threonine 635 and threonine 638 each carry an O-linked (GalNAc...) threonine glycan. A compositionally biased stretch (polar residues) spans 635–647 (TNQTSSISPTHSY). Residues serine 639 and serine 640 are each glycosylated (O-linked (GalNAc...) serine). O-linked (GalNAc...) threonine glycosylation is present at threonine 644. Residue serine 663 is glycosylated (O-linked (GalNAc...) serine). An O-linked (GalNAc...) threonine glycan is attached at threonine 673. A helical transmembrane segment spans residues 696–716 (LVALLVPTCVFLVVLLALGIV). Topologically, residues 717 to 765 (YCTRCGSHAPNKRITDCYRWVTHAGNKSSTEPMPPRGSLTGVQTCRTSV) are cytoplasmic. Position 754 is a phosphoserine (serine 754).

As to quaternary structure, interacts with PDGFRA; this interaction promotes PDGF receptor signaling pathway. Interacts with integrin beta-1/ITGB1. Interacts with insulin receptor/INSR; this interaction diminishes INSR autophosphorylation. Post-translationally, O-glycosylated by sialylated oligosaccharides. May be N-glycosylated. In terms of tissue distribution, expressed in cell lines derived from endothelial cells, embryonic fibroblasts and preadipocytes. Expressed in skeletal muscle by a subset of pericytes.

It localises to the membrane. Functionally, cell surface glycoprotein involved in various biological processes including angiogenesis, immune response modulation, and tissue remodeling and repair. Participates in pericyte proliferation through positive modulation of the PDGF receptor signaling pathway. Acts as a scaffold for factor X, triggering allosteric changes and the spatial re-alignment of factor X with the TF-factor VIIa complex, thereby enhancing coagulation activation. Modulates the insulin signaling pathway by interacting with insulin receptor/INSR and by diminishing its capacity to be autophosphorylated in response to insulin. Also regulates LPS-induced inflammatory responses in macrophages by favoring production of proinflammatory cytokines. The chain is Endosialin (Cd248) from Mus musculus (Mouse).